Reading from the N-terminus, the 78-residue chain is Metallothionein-like protein type 2 (78 aa).

Belongs to the metallothionein superfamily. Type 15 family.

Metallothioneins have a high content of cysteine residues that bind various heavy metals. This chain is Metallothionein-like protein type 2, found in Musa acuminata (Banana).